The primary structure comprises 55 residues: Large ribosomal subunit protein bL33B (55 aa).

Belongs to the bacterial ribosomal protein bL33 family.

The sequence is that of Large ribosomal subunit protein bL33B from Salinispora arenicola (strain CNS-205).